The chain runs to 89 residues: Bombyxin B-2 (89 aa).

Residues 1–19 (MKTSVMFMLVFVISLMCSS) form the signal peptide. Cystine bridges form between Cys-29-Cys-75, Cys-41-Cys-88, and Cys-74-Cys-79. A propeptide spans 48–66 (SGAQYAPYFWTRQYLGSRG) (c peptide like).

It belongs to the insulin family. As to quaternary structure, heterodimer of a B chain and an A chain linked by two disulfide bonds.

It localises to the secreted. In terms of biological role, brain peptide responsible for activation of prothoracic glands to produce ecdysone in insects. This Bombyx mori (Silk moth) protein is Bombyxin B-2 (BBXB2).